Consider the following 308-residue polypeptide: Ornithine carbamoyltransferase (308 aa).

Residues 57–60, Q84, R108, and 135–138 contribute to the carbamoyl phosphate site; these read STRT and HPCQ. L-ornithine contacts are provided by residues N166, D224, and 228–229; that span reads SM. Carbamoyl phosphate contacts are provided by residues 264–265 and R292; that span reads CL.

It belongs to the aspartate/ornithine carbamoyltransferase superfamily. OTCase family.

It localises to the cytoplasm. It carries out the reaction carbamoyl phosphate + L-ornithine = L-citrulline + phosphate + H(+). The protein operates within amino-acid degradation; L-arginine degradation via ADI pathway; carbamoyl phosphate from L-arginine: step 2/2. Functionally, reversibly catalyzes the transfer of the carbamoyl group from carbamoyl phosphate (CP) to the N(epsilon) atom of ornithine (ORN) to produce L-citrulline. In Ralstonia pickettii (strain 12J), this protein is Ornithine carbamoyltransferase.